The primary structure comprises 460 residues: MCSVTGVLIIKPENYEKIEKKLIQILKRAEDRGRDSFGVIVIEKDGSVRKVKALGRPSTQEEKLYGILDENSKVIIANNRAEPTTEYVRQKTEEDIQPFEGERYIVTHNGIIANDLELEKKYNVIRRTKIDSAVVPPILDKYWNGEIEQLKKILNDIKGSFAFIIGDKKRPNRIYIAQNFKPVYMMYDRELGAIFFTSLDDYFDASAFDSVTKLDPYSIVEVNDNLEIRKIQLLDKKIKKVLVIASGGLDSTVAATYLLRQGYEITLLHFNYHHKAEEREREAVKKIAEYLQVPLIEIDTDLFKIIGHTTLLKGGGEIVKDRLGEEGAEFAHEWVPARNLIFYSVALALAEAYGYDAIASGINLEEAGAYPDNEMEFVRLFAKLSPYATGPNKKVEVMMPVGNLVKHEIVKLGVEIGAPLHLTWSCYEGGQKHCGKCGPCYMRKMAFRINGLNDPVEYEN.

Cysteine 2 (for GATase activity) is an active-site residue. The 224-residue stretch at 2–225 (CSVTGVLIIK…PYSIVEVNDN (224 aa)) folds into the Glutamine amidotransferase type-2 domain. 245–255 (ASGGLDSTVAA) contacts ATP. 4 residues coordinate Zn(2+): cysteine 426, cysteine 434, cysteine 437, and cysteine 440.

The protein belongs to the QueC family. It depends on Zn(2+) as a cofactor.

The enzyme catalyses 7-carboxy-7-deazaguanine + NH4(+) + ATP = 7-cyano-7-deazaguanine + ADP + phosphate + H2O + H(+). The protein operates within purine metabolism; 7-cyano-7-deazaguanine biosynthesis. Catalyzes the ATP-dependent conversion of 7-carboxy-7-deazaguanine (CDG) to 7-cyano-7-deazaguanine (preQ(0)). This chain is 7-cyano-7-deazaguanine synthase 2 (queC2), found in Sulfurisphaera tokodaii (strain DSM 16993 / JCM 10545 / NBRC 100140 / 7) (Sulfolobus tokodaii).